The following is a 131-amino-acid chain: Small ribosomal subunit protein eS24 (131 aa).

Methionine 1 carries the N-acetylmethionine modification. Threonine 9 carries the post-translational modification Phosphothreonine. Lysine 37 participates in a covalent cross-link: Glycyl lysine isopeptide (Lys-Gly) (interchain with G-Cter in SUMO2). Residues 90-100 (RLARHGLYEKK) are compositionally biased toward basic and acidic residues. The interval 90-131 (RLARHGLYEKKKTSRKQRKERKNRMKKVRGTAKANVGAGKKK) is disordered. Residues 101–119 (KTSRKQRKERKNRMKKVRG) are compositionally biased toward basic residues.

This sequence belongs to the eukaryotic ribosomal protein eS24 family. As to quaternary structure, component of the small ribosomal subunit. Part of the small subunit (SSU) processome, composed of more than 70 proteins and the RNA chaperone small nucleolar RNA (snoRNA) U3.

The protein resides in the cytoplasm. It is found in the nucleus. The protein localises to the nucleolus. Its function is as follows. Component of the small ribosomal subunit. The ribosome is a large ribonucleoprotein complex responsible for the synthesis of proteins in the cell. Required for processing of pre-rRNA and maturation of 40S ribosomal subunits. Part of the small subunit (SSU) processome, first precursor of the small eukaryotic ribosomal subunit. During the assembly of the SSU processome in the nucleolus, many ribosome biogenesis factors, an RNA chaperone and ribosomal proteins associate with the nascent pre-rRNA and work in concert to generate RNA folding, modifications, rearrangements and cleavage as well as targeted degradation of pre-ribosomal RNA by the RNA exosome. This chain is Small ribosomal subunit protein eS24 (RPS24), found in Macaca fascicularis (Crab-eating macaque).